A 360-amino-acid chain; its full sequence is Decorin (360 aa).

An N-terminal signal peptide occupies residues 1-16; it reads MKATIIFFLVAQVSWA. Positions 17–30 are excised as a propeptide; that stretch reads GPFQQKGLFDFMLE. O-linked (Xyl...) (glycosaminoglycan) serine glycosylation is present at serine 34. Cystine bridges form between cysteine 55–cysteine 61 and cysteine 59–cysteine 68. LRR repeat units follow at residues 74 to 94, 95 to 118, 119 to 142, 143 to 163, 164 to 187, 188 to 213, 214 to 234, 235 to 258, 259 to 282, 283 to 305, 306 to 335, and 336 to 360; these read EKVP…NNKI, TEIK…NNKI, SKIS…KNQL, KELP…ENEI, TKVR…TNPL, KSSG…DTNI, TTIP…GNKI, TKVD…FNSI, SAVD…NNKL, VKVP…NNNI, SAIG…SNPV, and QYWE…GNYK. Asparagine 212 carries N-linked (GlcNAc...) asparagine glycosylation. 2 N-linked (GlcNAc...) asparagine glycosylation sites follow: asparagine 263 and asparagine 304. Cysteines 314 and 347 form a disulfide.

It belongs to the small leucine-rich proteoglycan (SLRP) family. SLRP class I subfamily. Binds to type I and type II collagen, fibronectin and TGF-beta. Forms a ternary complex with MFAP2 and ELN. Interacts with DPT. In terms of processing, the attached glycosaminoglycan chain can be either chondroitin sulfate or dermatan sulfate depending upon the tissue of origin.

It is found in the secreted. It localises to the extracellular space. Its subcellular location is the extracellular matrix. In terms of biological role, may affect the rate of fibrils formation. In Ovis aries (Sheep), this protein is Decorin (DCN).